An 83-amino-acid polypeptide reads, in one-letter code: uncharacterized protein (83 aa).

A run of 2 helical transmembrane segments spans residues 11-31 (FYCI…SFLL) and 48-68 (WHNL…HIWM).

Its subcellular location is the cell membrane. This is an uncharacterized protein from Bacillus subtilis (strain 168).